The following is a 196-amino-acid chain: MAGSKKTNRREEILQALAQMLESTEGASRITTAKLAKQVGVSEAALYRHFPSKARMFEGLIEFIEEALMTRINRILDDEKDTLERIRMVMHLILAFSERNPGLTRILSGHALMFENERLRDRINQLFERIETQLRQILRERKIREGKSFPVEERILAAQILGQVEGSLNRFVRSDFKYQPTANFDEYWALLSAQIK.

Positions 7–68 constitute an HTH tetR-type domain; the sequence is TNRREEILQA…GLIEFIEEAL (62 aa). The segment at residues 31 to 50 is a DNA-binding region (H-T-H motif); it reads TTAKLAKQVGVSEAALYRHF. Residues 110–142 are a coiled coil; it reads HALMFENERLRDRINQLFERIETQLRQILRERK.

This sequence belongs to the nucleoid occlusion factor SlmA family. In terms of assembly, homodimer. Interacts with FtsZ.

Its subcellular location is the cytoplasm. The protein resides in the nucleoid. Required for nucleoid occlusion (NO) phenomenon, which prevents Z-ring formation and cell division over the nucleoid. Acts as a DNA-associated cell division inhibitor that binds simultaneously chromosomal DNA and FtsZ, and disrupts the assembly of FtsZ polymers. SlmA-DNA-binding sequences (SBS) are dispersed on non-Ter regions of the chromosome, preventing FtsZ polymerization at these regions. This chain is Nucleoid occlusion factor SlmA, found in Vibrio campbellii (strain ATCC BAA-1116).